A 458-amino-acid polypeptide reads, in one-letter code: Transmembrane protein 143 (458 aa).

A run of 2 helical transmembrane segments spans residues 277–297 (LLNL…GMVI) and 298–318 (LSDL…FMGV). Ser-329 carries the phosphoserine modification.

It is found in the membrane. In Mus musculus (Mouse), this protein is Transmembrane protein 143 (Tmem143).